Reading from the N-terminus, the 227-residue chain is ATP synthase F(0) complex subunit a (227 aa).

6 helical membrane-spanning segments follow: residues 14–34 (LLGIPLILLSLLFPTLLLPSP), 69–89 (WALILTSLMTFLLLINLLGLL), 98–118 (QLSMNMALAFPLWLATLLTGL), 139–159 (IPALILIETTSLLIRPLALGV), 174–194 (LISTATLALLPTMPTISVLTA), and 196–216 (VLLLLTILELAVAMIQAYVFV).

Belongs to the ATPase A chain family. Component of the ATP synthase complex composed at least of ATP5F1A/subunit alpha, ATP5F1B/subunit beta, ATP5MC1/subunit c (homooctomer), MT-ATP6/subunit a, MT-ATP8/subunit 8, ATP5ME/subunit e, ATP5MF/subunit f, ATP5MG/subunit g, ATP5MK/subunit k, ATP5MJ/subunit j, ATP5F1C/subunit gamma, ATP5F1D/subunit delta, ATP5F1E/subunit epsilon, ATP5PF/subunit F6, ATP5PB/subunit b, ATP5PD/subunit d, ATP5PO/subunit OSCP. ATP synthase complex consists of a soluble F(1) head domain (subunits alpha(3) and beta(3)) - the catalytic core - and a membrane F(0) domain - the membrane proton channel (subunits c, a, 8, e, f, g, k and j). These two domains are linked by a central stalk (subunits gamma, delta, and epsilon) rotating inside the F1 region and a stationary peripheral stalk (subunits F6, b, d, and OSCP). Interacts with DNAJC30; interaction is direct.

The protein localises to the mitochondrion inner membrane. The catalysed reaction is H(+)(in) = H(+)(out). Its function is as follows. Subunit a, of the mitochondrial membrane ATP synthase complex (F(1)F(0) ATP synthase or Complex V) that produces ATP from ADP in the presence of a proton gradient across the membrane which is generated by electron transport complexes of the respiratory chain. ATP synthase complex consist of a soluble F(1) head domain - the catalytic core - and a membrane F(1) domain - the membrane proton channel. These two domains are linked by a central stalk rotating inside the F(1) region and a stationary peripheral stalk. During catalysis, ATP synthesis in the catalytic domain of F(1) is coupled via a rotary mechanism of the central stalk subunits to proton translocation. With the subunit c (ATP5MC1), forms the proton-conducting channel in the F(0) domain, that contains two crucial half-channels (inlet and outlet) that facilitate proton movement from the mitochondrial intermembrane space (IMS) into the matrix. Protons are taken up via the inlet half-channel and released through the outlet half-channel, following a Grotthuss mechanism. This Struthio camelus (Common ostrich) protein is ATP synthase F(0) complex subunit a.